The following is a 171-amino-acid chain: RNA silencing suppressor p19 (171 aa).

Residues 1–15 (MERAIPGNDTREPAY) are compositionally biased toward basic and acidic residues. Residues 1–32 (MERAIPGNDTREPAYGERWNGGPGGSTSPFQL) are disordered.

Belongs to the tombusvirus protein p19 family. As to quaternary structure, homodimer.

Viral suppressor of RNA silencing which binds specifically to silencing RNAs (siRNAs). Acts as a molecular caliper to specifically select siRNAs based on the length of the duplex region of the RNA. The protein is RNA silencing suppressor p19 of Capsicum annuum (Capsicum pepper).